The sequence spans 248 residues: Proteasome subunit alpha type-1 (248 aa).

It belongs to the peptidase T1A family. In terms of assembly, the 26S proteasome consists of a 20S proteasome core and two 19S regulatory subunits. The 20S proteasome core is composed of 28 subunits that are arranged in four stacked rings, resulting in a barrel-shaped structure. The two end rings are each formed by seven alpha subunits, and the two central rings are each formed by seven beta subunits. The catalytic chamber with the active sites is on the inside of the barrel.

Its subcellular location is the cytoplasm. The protein resides in the nucleus. In terms of biological role, the proteasome is a multicatalytic proteinase complex which is characterized by its ability to cleave peptides with Arg, Phe, Tyr, Leu, and Glu adjacent to the leaving group at neutral or slightly basic pH. The proteasome has an ATP-dependent proteolytic activity. This Dictyostelium discoideum (Social amoeba) protein is Proteasome subunit alpha type-1 (psmA1).